A 144-amino-acid polypeptide reads, in one-letter code: D-aminoacyl-tRNA deacylase (144 aa).

The Gly-cisPro motif, important for rejection of L-amino acids motif lies at 137 to 138 (GP).

The protein belongs to the DTD family. As to quaternary structure, homodimer.

It localises to the cytoplasm. It carries out the reaction glycyl-tRNA(Ala) + H2O = tRNA(Ala) + glycine + H(+). It catalyses the reaction a D-aminoacyl-tRNA + H2O = a tRNA + a D-alpha-amino acid + H(+). Functionally, an aminoacyl-tRNA editing enzyme that deacylates mischarged D-aminoacyl-tRNAs. Also deacylates mischarged glycyl-tRNA(Ala), protecting cells against glycine mischarging by AlaRS. Acts via tRNA-based rather than protein-based catalysis; rejects L-amino acids rather than detecting D-amino acids in the active site. By recycling D-aminoacyl-tRNA to D-amino acids and free tRNA molecules, this enzyme counteracts the toxicity associated with the formation of D-aminoacyl-tRNA entities in vivo and helps enforce protein L-homochirality. This Acinetobacter baumannii (strain SDF) protein is D-aminoacyl-tRNA deacylase.